The following is an 831-amino-acid chain: Molybdenum cofactor sulfurase (831 aa).

N6-(pyridoxal phosphate)lysine is present on Lys-262. The active site involves Cys-422. The 173-residue stretch at 651-823 folds into the MOSC domain; that stretch reads AWLSEFLGKP…LSIGSHVIPK (173 aa).

It belongs to the class-V pyridoxal-phosphate-dependent aminotransferase family. MOCOS subfamily. Requires pyridoxal 5'-phosphate as cofactor.

The enzyme catalyses Mo-molybdopterin + L-cysteine + AH2 = thio-Mo-molybdopterin + L-alanine + A + H2O. Its pathway is cofactor biosynthesis; molybdopterin biosynthesis. In terms of biological role, sulfurates the molybdenum cofactor. Sulfation of molybdenum is essential for xanthine dehydrogenase (XDH) and aldehyde oxidase (ADO) enzymes in which molybdenum cofactor is liganded by 1 oxygen and 1 sulfur atom in active form. This Danio rerio (Zebrafish) protein is Molybdenum cofactor sulfurase (mocos).